The sequence spans 220 residues: Thioredoxin domain-containing protein (220 aa).

A signal peptide spans Met-1–Ala-19. Positions Thr-20–Asn-141 constitute a Thioredoxin domain. Residues Thr-20–Thr-181 are Lumenal-facing. A disulfide bridge links Cys-64 with Cys-67. Residues Ile-182–Phe-202 traverse the membrane as a helical segment. Topologically, residues Thr-203 to Lys-220 are cytoplasmic. The Di-lysine motif signature appears at Lys-217–Lys-220.

Belongs to the protein disulfide isomerase family.

The protein resides in the endoplasmic reticulum membrane. The polypeptide is Thioredoxin domain-containing protein (Theileria parva (East coast fever infection agent)).